Here is a 190-residue protein sequence, read N- to C-terminus: ADP-ribosylation factor F (190 aa).

Residues 34 to 40 (DGAGKST), 75 to 79 (DIGGQ), and 136 to 139 (NKQD) contribute to the GTP site.

Belongs to the small GTPase superfamily. Arf family.

It is found in the golgi apparatus. Functionally, GTP-binding protein that may be involved in protein trafficking. May modulate vesicle budding and uncoating within the Golgi apparatus. The chain is ADP-ribosylation factor F (arrF) from Dictyostelium discoideum (Social amoeba).